Reading from the N-terminus, the 215-residue chain is UPF0502 protein YceH (215 aa).

It belongs to the UPF0502 family.

The polypeptide is UPF0502 protein YceH (Salmonella paratyphi A (strain ATCC 9150 / SARB42)).